A 123-amino-acid chain; its full sequence is uncharacterized protein (123 aa).

In terms of domain architecture, Rhodanese spans 17–117 (SNDNAFLVDV…NNQDKGWKQN (101 aa)).

This is an uncharacterized protein from Rickettsia rickettsii.